Here is a 224-residue protein sequence, read N- to C-terminus: IAP-like protein p27 (224 aa).

Residues 29 to 92 form a BIR repeat; sequence VDARNQSFAI…GFWSRNCGFM (64 aa). Zn(2+) is bound by residues cysteine 62, cysteine 65, histidine 82, and cysteine 89.

Functionally, not essential for growth or virulence. Does not have antiapoptotic function. In Ornithodoros (relapsing fever ticks), this protein is IAP-like protein p27 (p27).